Reading from the N-terminus, the 383-residue chain is Phospho-N-acetylmuramoyl-pentapeptide-transferase (383 aa).

9 helical membrane passes run 26–46, 73–93, 98–118, 131–151, 182–202, 221–241, 258–278, 283–305, and 360–380; these read TAGA…GVIE, TMGG…WAEL, IILL…DDFL, IYKI…LYYF, IFLP…IPFA, GLAI…SYVS, AGEV…FLWF, AQVF…IALF, and QVVF…IATL.

It belongs to the glycosyltransferase 4 family. MraY subfamily. Mg(2+) serves as cofactor.

It is found in the cell inner membrane. It carries out the reaction UDP-N-acetyl-alpha-D-muramoyl-L-alanyl-gamma-D-glutamyl-meso-2,6-diaminopimeloyl-D-alanyl-D-alanine + di-trans,octa-cis-undecaprenyl phosphate = di-trans,octa-cis-undecaprenyl diphospho-N-acetyl-alpha-D-muramoyl-L-alanyl-D-glutamyl-meso-2,6-diaminopimeloyl-D-alanyl-D-alanine + UMP. It participates in cell wall biogenesis; peptidoglycan biosynthesis. Its function is as follows. Catalyzes the initial step of the lipid cycle reactions in the biosynthesis of the cell wall peptidoglycan: transfers peptidoglycan precursor phospho-MurNAc-pentapeptide from UDP-MurNAc-pentapeptide onto the lipid carrier undecaprenyl phosphate, yielding undecaprenyl-pyrophosphoryl-MurNAc-pentapeptide, known as lipid I. In Brachyspira hyodysenteriae (strain ATCC 49526 / WA1), this protein is Phospho-N-acetylmuramoyl-pentapeptide-transferase.